The primary structure comprises 282 residues: 2-dehydro-3-deoxyphosphooctonate aldolase (282 aa).

It belongs to the KdsA family.

The protein resides in the cytoplasm. The enzyme catalyses D-arabinose 5-phosphate + phosphoenolpyruvate + H2O = 3-deoxy-alpha-D-manno-2-octulosonate-8-phosphate + phosphate. It participates in carbohydrate biosynthesis; 3-deoxy-D-manno-octulosonate biosynthesis; 3-deoxy-D-manno-octulosonate from D-ribulose 5-phosphate: step 2/3. The protein operates within bacterial outer membrane biogenesis; lipopolysaccharide biosynthesis. The protein is 2-dehydro-3-deoxyphosphooctonate aldolase of Shewanella amazonensis (strain ATCC BAA-1098 / SB2B).